A 345-amino-acid chain; its full sequence is Dihydroorotate dehydrogenase (quinone) (345 aa).

FMN-binding positions include 65–69 (AGLDK) and Thr-89. Substrate is bound at residue Lys-69. 114–118 (NRMGF) is a substrate binding site. Residues Asn-142 and Asn-175 each contribute to the FMN site. Residue Asn-175 participates in substrate binding. The active-site Nucleophile is Ser-178. Asn-180 is a substrate binding site. 2 residues coordinate FMN: Lys-220 and Thr-248. 249–250 (NT) contacts substrate. Residues Gly-271, Gly-300, and 321-322 (YT) contribute to the FMN site.

This sequence belongs to the dihydroorotate dehydrogenase family. Type 2 subfamily. In terms of assembly, monomer. It depends on FMN as a cofactor.

It localises to the cell membrane. The catalysed reaction is (S)-dihydroorotate + a quinone = orotate + a quinol. Its pathway is pyrimidine metabolism; UMP biosynthesis via de novo pathway; orotate from (S)-dihydroorotate (quinone route): step 1/1. Its function is as follows. Catalyzes the conversion of dihydroorotate to orotate with quinone as electron acceptor. The chain is Dihydroorotate dehydrogenase (quinone) from Burkholderia multivorans (strain ATCC 17616 / 249).